We begin with the raw amino-acid sequence, 394 residues long: Phosphopentomutase (394 aa).

6 residues coordinate Mn(2+): Asp-14, Asp-287, His-292, Asp-328, His-329, and His-340.

The protein belongs to the phosphopentomutase family. Mn(2+) is required as a cofactor.

The protein resides in the cytoplasm. It catalyses the reaction 2-deoxy-alpha-D-ribose 1-phosphate = 2-deoxy-D-ribose 5-phosphate. The catalysed reaction is alpha-D-ribose 1-phosphate = D-ribose 5-phosphate. It functions in the pathway carbohydrate degradation; 2-deoxy-D-ribose 1-phosphate degradation; D-glyceraldehyde 3-phosphate and acetaldehyde from 2-deoxy-alpha-D-ribose 1-phosphate: step 1/2. Isomerase that catalyzes the conversion of deoxy-ribose 1-phosphate (dRib-1-P) and ribose 1-phosphate (Rib-1-P) to deoxy-ribose 5-phosphate (dRib-5-P) and ribose 5-phosphate (Rib-5-P), respectively. The protein is Phosphopentomutase of Listeria welshimeri serovar 6b (strain ATCC 35897 / DSM 20650 / CCUG 15529 / CIP 8149 / NCTC 11857 / SLCC 5334 / V8).